The primary structure comprises 513 residues: Calcium-binding mitochondrial carrier protein SCaMC-2 (513 aa).

At 1-233 the chain is on the mitochondrial intermembrane side; that stretch reads MARPRSLVSP…EKQTGMWWRH (233 aa). 4 EF-hand domains span residues 55 to 90, 91 to 124, 122 to 157, and 158 to 193; these read EHET…LGVH, RTEL…RDHE, DHEK…LGVN, and ISEQ…HPAE. Ca(2+)-binding residues include Asp-68, Asn-70, Asp-72, Asp-79, Asp-104, Asp-106, Asp-108, Gln-110, and Glu-115. Solcar repeat units follow at residues 228–314, 322–407, and 419–507; these read GMWW…MKRI, LGIH…LKNA, and PGVF…LKLT. The helical transmembrane segment at 234–251 threads the bilayer; it reads LVAGGGAGAVSRTCTAPL. Over 252-288 the chain is Mitochondrial matrix; that stretch reads DRLKVLMQVHASRSNNMSMLGGFTQMIREGGIRSLWR. A helical membrane pass occupies residues 289 to 308; the sequence is GNGINVIKIAPESAIKFMAY. The Mitochondrial intermembrane portion of the chain corresponds to 309–331; sequence EQMKRIIGSDQETLGIHERLVAG. The chain crosses the membrane as a helical span at residues 332 to 345; the sequence is SLAGVIAQSSIYPM. The Mitochondrial matrix segment spans residues 346–381; sequence EVLKTRMALRKTGQYQGMLDCGKKILLKEGVSAFYK. The chain crosses the membrane as a helical span at residues 382–401; that stretch reads GYVPNMLGIIPYAGIDLAVY. Residues 402-424 are Mitochondrial intermembrane-facing; sequence ETLKNAWLQRYATSSADPGVFVL. Residues 425-442 traverse the membrane as a helical segment; sequence LACGTISSTCGQLASYPL. Residues 443 to 481 are Mitochondrial matrix-facing; it reads ALVRTRMQAEASVEGAPQMTMSKLFKHIVKTEGAFGLYR. The chain crosses the membrane as a helical span at residues 482 to 501; sequence GLAPNFMKVIPAVSISYVVY. Over 502–513 the chain is Mitochondrial intermembrane; the sequence is ENLKLTLGVQSR.

This sequence belongs to the mitochondrial carrier (TC 2.A.29) family.

The protein localises to the mitochondrion inner membrane. Its function is as follows. Calcium-dependent mitochondrial solute carrier. The chain is Calcium-binding mitochondrial carrier protein SCaMC-2 (slc25a25) from Xenopus tropicalis (Western clawed frog).